A 411-amino-acid polypeptide reads, in one-letter code: Glutamate dehydrogenase 1 (411 aa).

Lys102 is a catalytic residue.

This sequence belongs to the Glu/Leu/Phe/Val dehydrogenases family.

The catalysed reaction is L-glutamate + NAD(+) + H2O = 2-oxoglutarate + NH4(+) + NADH + H(+). The enzyme catalyses L-glutamate + NADP(+) + H2O = 2-oxoglutarate + NH4(+) + NADPH + H(+). In Arabidopsis thaliana (Mouse-ear cress), this protein is Glutamate dehydrogenase 1 (GDH1).